The following is a 119-amino-acid chain: Ribosome-binding factor A (119 aa).

It belongs to the RbfA family. Monomer. Binds 30S ribosomal subunits, but not 50S ribosomal subunits or 70S ribosomes.

The protein localises to the cytoplasm. Functionally, one of several proteins that assist in the late maturation steps of the functional core of the 30S ribosomal subunit. Associates with free 30S ribosomal subunits (but not with 30S subunits that are part of 70S ribosomes or polysomes). Required for efficient processing of 16S rRNA. May interact with the 5'-terminal helix region of 16S rRNA. This chain is Ribosome-binding factor A, found in Geobacter sp. (strain M21).